A 548-amino-acid polypeptide reads, in one-letter code: Glucose-6-phosphate isomerase (548 aa).

The Proton donor role is filled by glutamate 355. Active-site residues include histidine 386 and lysine 514.

The protein belongs to the GPI family.

Its subcellular location is the cytoplasm. It carries out the reaction alpha-D-glucose 6-phosphate = beta-D-fructose 6-phosphate. It participates in carbohydrate biosynthesis; gluconeogenesis. Its pathway is carbohydrate degradation; glycolysis; D-glyceraldehyde 3-phosphate and glycerone phosphate from D-glucose: step 2/4. Its function is as follows. Catalyzes the reversible isomerization of glucose-6-phosphate to fructose-6-phosphate. The polypeptide is Glucose-6-phosphate isomerase (Hamiltonella defensa subsp. Acyrthosiphon pisum (strain 5AT)).